Consider the following 635-residue polypeptide: Cationic amino acid transporter 2, vacuolar (635 aa).

Residues 1-48 (MGFLVDTQKEGGGHSWGYVRSLVRRKQVDSANGQSHGHQLARALTVPH) are Cytoplasmic-facing. Residues 49 to 69 (LVAIGVGATIGAGVYILVGTV) traverse the membrane as a helical segment. Residues 70–76 (AREHSGP) lie on the Vacuolar side of the membrane. The chain crosses the membrane as a helical span at residues 77 to 97 (SLALSFLIAGIAAGLSAFCYA). The Cytoplasmic segment spans residues 98–108 (ELSSRCPSAGS). Residues 109–131 (AYHYSYICVGEGVAWIIGWALIL) traverse the membrane as a helical segment. Residues 132–171 (EYTIGGSAVARGISPNLALIFGGEDGLPAILARHQIPGLD) lie on the Vacuolar side of the membrane. A helical transmembrane segment spans residues 172–192 (IVVDPCAAILVFVVTGLLCMG). Residues 193–200 (IKESTFAQ) lie on the Cytoplasmic side of the membrane. The helical transmembrane segment at 201 to 221 (GIVTAVNVCVLLFVIVAGSYL) threads the bilayer. Topologically, residues 222–235 (GFKTGWPGYELPTG) are vacuolar. A helical transmembrane segment spans residues 236-256 (FFPFGVDGMFAGSATVFFAFI). The Cytoplasmic segment spans residues 257 to 280 (GFDSVASTAEEVRNPQRDLPIGIG). The helical transmembrane segment at 281 to 301 (LALLLCCSLYMMVSIVIVGLI) threads the bilayer. Residues 302–324 (PYYAMDPDTPISSAFASHDMQWA) lie on the Vacuolar side of the membrane. A helical transmembrane segment spans residues 325–345 (VYLITLGAVMALCSALMGALL). Over 346–376 (PQPRILMAMARDGLLPSIFSDINKRTQVPVK) the chain is Cytoplasmic. A helical transmembrane segment spans residues 377-397 (ATVATGLCAATLAFFMDVSQL). A topological domain (vacuolar) is located at residue Ala-398. A helical membrane pass occupies residues 399-419 (GMVSVGTLLAFTMVAISVLIL). Topologically, residues 420-493 (RYVPPDEQPL…CLVLSEETRR (74 aa)) are cytoplasmic. The helical transmembrane segment at 494–514 (IVAGWSIMFTCVGAFLLSYAA) threads the bilayer. The Vacuolar portion of the chain corresponds to 515 to 524 (SSLSFPGLIR). Residues 525–545 (YPLCGVGGCLLLAGLIALSSI) form a helical membrane-spanning segment. At 546–560 (DQDDARHTFGHSGGY) the chain is on the cytoplasmic side. The helical transmembrane segment at 561–581 (MCPFVPLLPIICILINMYLLV) threads the bilayer. Residues 582–585 (NLGS) are Vacuolar-facing. Residues 586-606 (ATWARVSVWLLIGVIVYVFYG) traverse the membrane as a helical segment. Residues 607–635 (RKNSSLANAVYVTTAHAEEIYREHEGSLA) lie on the Cytoplasmic side of the membrane.

This sequence belongs to the amino acid-polyamine-organocation (APC) superfamily. Cationic amino acid transporter (CAT) (TC 2.A.3.3) family. Expressed in roots, stems, flowers, leaves, and siliques.

It is found in the vacuole membrane. Permease involved in the transport of the cationic amino acids. The sequence is that of Cationic amino acid transporter 2, vacuolar (CAT2) from Arabidopsis thaliana (Mouse-ear cress).